Consider the following 857-residue polypeptide: DNA mismatch repair protein MutS (857 aa).

Gly-608 to Ser-615 lines the ATP pocket.

It belongs to the DNA mismatch repair MutS family.

Its function is as follows. This protein is involved in the repair of mismatches in DNA. It is possible that it carries out the mismatch recognition step. This protein has a weak ATPase activity. The sequence is that of DNA mismatch repair protein MutS from Lacticaseibacillus paracasei (strain ATCC 334 / BCRC 17002 / CCUG 31169 / CIP 107868 / KCTC 3260 / NRRL B-441) (Lactobacillus paracasei).